We begin with the raw amino-acid sequence, 308 residues long: Aspartate carbamoyltransferase catalytic subunit (308 aa).

Carbamoyl phosphate contacts are provided by arginine 59 and threonine 60. Lysine 87 provides a ligand contact to L-aspartate. Carbamoyl phosphate is bound by residues arginine 109, histidine 137, and glutamine 140. Positions 170 and 224 each coordinate L-aspartate. The carbamoyl phosphate site is built by glycine 265 and proline 266.

Belongs to the aspartate/ornithine carbamoyltransferase superfamily. ATCase family. Heterododecamer (2C3:3R2) of six catalytic PyrB chains organized as two trimers (C3), and six regulatory PyrI chains organized as three dimers (R2).

It catalyses the reaction carbamoyl phosphate + L-aspartate = N-carbamoyl-L-aspartate + phosphate + H(+). The protein operates within pyrimidine metabolism; UMP biosynthesis via de novo pathway; (S)-dihydroorotate from bicarbonate: step 2/3. Its function is as follows. Catalyzes the condensation of carbamoyl phosphate and aspartate to form carbamoyl aspartate and inorganic phosphate, the committed step in the de novo pyrimidine nucleotide biosynthesis pathway. The protein is Aspartate carbamoyltransferase catalytic subunit of Flavobacterium psychrophilum (strain ATCC 49511 / DSM 21280 / CIP 103535 / JIP02/86).